The chain runs to 495 residues: NADH-ubiquinone oxidoreductase chain 4 (495 aa).

14 helical membrane-spanning segments follow: residues 9 to 29, 37 to 57, 89 to 109, 118 to 138, 139 to 159, 173 to 193, 214 to 234, 245 to 265, 272 to 292, 307 to 327, 335 to 355, 367 to 387, 413 to 433, and 457 to 477; these read YSNL…ILVI, IRGI…FFWI, ISLF…LVGF, EYMI…CSLD, LLIF…IIGV, FFLY…FIFF, ILLW…VPVH, PTAG…YGFL, FPEA…IAII, IIAY…FSLN, ILLM…VGAL, YGGL…FTLA, LVAT…LWLY, and VLIF…PEVF.

This sequence belongs to the complex I subunit 4 family.

The protein resides in the mitochondrion membrane. It carries out the reaction a ubiquinone + NADH + 5 H(+)(in) = a ubiquinol + NAD(+) + 4 H(+)(out). Core subunit of the mitochondrial membrane respiratory chain NADH dehydrogenase (Complex I) that is believed to belong to the minimal assembly required for catalysis. Complex I functions in the transfer of electrons from NADH to the respiratory chain. The immediate electron acceptor for the enzyme is believed to be ubiquinone. This Marchantia polymorpha (Common liverwort) protein is NADH-ubiquinone oxidoreductase chain 4 (ND4).